The sequence spans 220 residues: Histone H1B (220 aa).

2 disordered regions span residues 1 to 45 (MTAT…PSAS) and 99 to 220 (QVKG…APKK). A compositionally biased stretch (low complexity) spans 28-45 (KKVAGGAKAKKPSGPSAS). In terms of domain architecture, H15 spans 40 to 113 (SGPSASELIV…GASGSFKLNK (74 aa)). Composition is skewed to basic residues over residues 122–134 (AAKK…KAKK), 141–151 (KAPKSPKKPKK), 158–196 (SPKK…KPKT), and 204–220 (KVAK…APKK).

The protein belongs to the histone H1/H5 family.

The protein localises to the nucleus. Its subcellular location is the chromosome. Functionally, histones H1 are necessary for the condensation of nucleosome chains into higher-order structures. The sequence is that of Histone H1B from Xenopus laevis (African clawed frog).